A 597-amino-acid chain; its full sequence is DNA polymerase III subunit gamma/tau (597 aa).

An ATP-binding site is contributed by 44–51; sequence GERGTGKT. Residues cysteine 63, cysteine 72, cysteine 75, and cysteine 78 each contribute to the Zn(2+) site.

The protein belongs to the DnaX/STICHEL family. In terms of assembly, DNA polymerase III contains a core (composed of alpha, epsilon and theta chains) that associates with a tau subunit. This core dimerizes to form the POLIII' complex. PolIII' associates with the gamma complex (composed of gamma, delta, delta', psi and chi chains) and with the beta chain to form the complete DNA polymerase III complex.

The catalysed reaction is DNA(n) + a 2'-deoxyribonucleoside 5'-triphosphate = DNA(n+1) + diphosphate. Functionally, DNA polymerase III is a complex, multichain enzyme responsible for most of the replicative synthesis in bacteria. This DNA polymerase also exhibits 3' to 5' exonuclease activity. This Mycoplasma genitalium (strain ATCC 33530 / DSM 19775 / NCTC 10195 / G37) (Mycoplasmoides genitalium) protein is DNA polymerase III subunit gamma/tau (dnaX).